A 378-amino-acid chain; its full sequence is T-cell immunoglobulin and mucin domain-containing protein 4 (378 aa).

A signal peptide spans 1 to 24 (MSKEPLILWLMIEFWWLYLTPVTS). One can recognise an Ig-like V-type domain in the interval 25–126 (ETVVTEVLGH…PGWFNDVKIN (102 aa)). Residues 25 to 314 (ETVVTEVLGH…SMKNEMPISQ (290 aa)) lie on the Extracellular side of the membrane. Disulfide bonds link C40–C112, C53–C64, and C59–C111. Disordered regions lie at residues 136 to 160 (TTTH…TRQM) and 269 to 304 (WKTS…GIPM). Residues 269–297 (WKTSDSVSSPQPGASDTAVPEQNKTTKTG) show a composition bias toward polar residues. N-linked (GlcNAc...) asparagine glycosylation is present at N291. The helical transmembrane segment at 315–335 (LLMIIAPSLGFVLFALFVAFL) threads the bilayer. Over 336 to 378 (LRGKLMETYCSQKHTRLDYIGDSKNVLNDVQHGREDEDGLFTL) the chain is Cytoplasmic. The residue at position 358 (S358) is a Phosphoserine.

This sequence belongs to the immunoglobulin superfamily. TIM family. In terms of assembly, interacts with MERTK; this interaction enhances TIMD4-mediated efferocytosis. Interacts with EPHA2.

It localises to the cell membrane. The protein localises to the secreted. The protein resides in the extracellular exosome. Functionally, phosphatidylserine receptor that plays different role in immune response including phagocytosis of apoptotic cells and T-cell regulation. Controls T-cell activation in a bimodal fashion, decreasing the activation of naive T-cells by inducing cell cycle arrest, while increasing proliferation of activated T-cells by activating AKT1 and ERK1/2 phosphorylations and subsequent signaling pathways. Also plays a role in efferocytosis which is the process by which apoptotic cells are removed by phagocytic cells. Mechanistically, promotes the engulfment of apoptotic cells or exogenous particles by securing them to phagocytes through direct binding to phosphatidylserine present on apoptotic cells, while other engulfment receptors such as MERTK efficiently recognize apoptotic cells and mediate their ingestion. Additionally, promotes autophagy process by suppressing NLRP3 inflammasome activity via activation of LKB1/PRKAA1 pathway in a phosphatidylserine-dependent mechanism. Its function is as follows. (Microbial infection) Plays a positive role in exosome-mediated trafficking of HIV-1 virus and its entry into immune cells. The sequence is that of T-cell immunoglobulin and mucin domain-containing protein 4 (TIMD4) from Homo sapiens (Human).